Here is a 92-residue protein sequence, read N- to C-terminus: NELL2-interacting cell ontogeny regulator 1 (92 aa).

The signal sequence occupies residues 1–30; it reads MALPSAWSVMRVVIPFISVLGLLGVRLVGA.

This sequence belongs to the NICOL family.

Its subcellular location is the secreted. It is found in the cytoplasm. The protein localises to the perinuclear region. MRNA-binding protein which interacts with a range of target mRNAs and may promote extracellular matrix production. May function as a component of lumicrine signaling and may play a crucial role in epididymal-mediated sperm maturation and male fertility. The chain is NELL2-interacting cell ontogeny regulator 1 from Gallus gallus (Chicken).